Consider the following 405-residue polypeptide: Argininosuccinate synthase (405 aa).

ATP is bound by residues 10–18 (AYSGGLDTS) and Ala37. L-citrulline-binding residues include Tyr88 and Ser93. Gly118 lines the ATP pocket. Thr120, Asn124, and Asp125 together coordinate L-aspartate. Asn124 lines the L-citrulline pocket. L-citrulline is bound by residues Arg128, Ser179, Ser188, Glu264, and Tyr276.

This sequence belongs to the argininosuccinate synthase family. Type 1 subfamily. Homotetramer.

The protein resides in the cytoplasm. It catalyses the reaction L-citrulline + L-aspartate + ATP = 2-(N(omega)-L-arginino)succinate + AMP + diphosphate + H(+). It functions in the pathway amino-acid biosynthesis; L-arginine biosynthesis; L-arginine from L-ornithine and carbamoyl phosphate: step 2/3. The sequence is that of Argininosuccinate synthase from Pseudomonas aeruginosa (strain LESB58).